A 371-amino-acid polypeptide reads, in one-letter code: Chaperone protein DnaJ (371 aa).

The region spanning 5 to 70 (SYYDILGVSK…KKRQAYDQFG (66 aa)) is the J domain. A CR-type zinc finger spans residues 139-217 (GREYKIEIPR…CGGQGLQEKR (79 aa)). Cysteine 152, cysteine 155, cysteine 169, cysteine 172, cysteine 191, cysteine 194, cysteine 205, and cysteine 208 together coordinate Zn(2+). 4 CXXCXGXG motif repeats span residues 152-159 (CGDCNGSG), 169-176 (CPDCGGSG), 191-198 (CPTCRGKG), and 205-212 (CKTCGGQG).

Belongs to the DnaJ family. In terms of assembly, homodimer. Requires Zn(2+) as cofactor.

The protein localises to the cytoplasm. In terms of biological role, participates actively in the response to hyperosmotic and heat shock by preventing the aggregation of stress-denatured proteins and by disaggregating proteins, also in an autonomous, DnaK-independent fashion. Unfolded proteins bind initially to DnaJ; upon interaction with the DnaJ-bound protein, DnaK hydrolyzes its bound ATP, resulting in the formation of a stable complex. GrpE releases ADP from DnaK; ATP binding to DnaK triggers the release of the substrate protein, thus completing the reaction cycle. Several rounds of ATP-dependent interactions between DnaJ, DnaK and GrpE are required for fully efficient folding. Also involved, together with DnaK and GrpE, in the DNA replication of plasmids through activation of initiation proteins. In Leptospira borgpetersenii serovar Hardjo-bovis (strain JB197), this protein is Chaperone protein DnaJ.